The following is a 518-amino-acid chain: Protein MGF 505-6R (518 aa).

ANK repeat units follow at residues S54–Y83, E129–V158, S261–G290, I292–N322, and K324–D351.

It belongs to the asfivirus MGF 505 family.

Functionally, plays a role in virus cell tropism, and may be required for efficient virus replication in macrophages. The polypeptide is Protein MGF 505-6R (Ornithodoros (relapsing fever ticks)).